Reading from the N-terminus, the 179-residue chain is UPF0227 protein VC0395_A1482/VC395_2007 (179 aa).

It belongs to the UPF0227 family.

The chain is UPF0227 protein VC0395_A1482/VC395_2007 from Vibrio cholerae serotype O1 (strain ATCC 39541 / Classical Ogawa 395 / O395).